The sequence spans 533 residues: Death domain-containing ATP nucleosidase (533 aa).

The death domain stretch occupies residues M1–S262. Residues S184–S248 are disordered. Residues P218–T227 are compositionally biased toward polar residues. The span at S236 to S248 shows a compositional bias: low complexity. The tract at residues D263–M533 is purine nucleoside phosphorylase domain.

The enzyme catalyses ATP + H2O = D-ribose 5-triphosphate + adenine. It catalyses the reaction dATP + H2O = 2-deoxyribose 5-triphosphate + adenine. In terms of biological role, the C-terminal purine nucleoside phosphorylase (PNP) domain cleaves the N-glycosidic bond of ATP, and to a lesser extent dATP, to release adenine and a sugar triphosphate; has weak activity on ADP and AMP and no activity on dADP, dAMP, adenosine, deoxyadenosine or other (d)NTPs. The protein is Death domain-containing ATP nucleosidase (109585858) of Amphimedon queenslandica (Sponge).